We begin with the raw amino-acid sequence, 460 residues long: uncharacterized protein (460 aa).

In terms of domain architecture, TRAM spans 5-63 (TWHQGELIEVAIADLSDTGDGVGRFAERVVFVPDTVPGDRVLVRLLHVKPNYAHGKLHQ). The [4Fe-4S] cluster site is built by Cys76, Cys82, Cys85, and Cys164. Gln288, Tyr317, Glu338, and Asp383 together coordinate S-adenosyl-L-methionine. Cys410 acts as the Nucleophile in catalysis.

It belongs to the class I-like SAM-binding methyltransferase superfamily. RNA M5U methyltransferase family.

This is an uncharacterized protein from Nostoc sp. (strain PCC 7120 / SAG 25.82 / UTEX 2576).